The chain runs to 264 residues: Thymidylate synthase (264 aa).

Arg21 serves as a coordination point for dUMP. His51 is a binding site for (6R)-5,10-methylene-5,6,7,8-tetrahydrofolate. 126-127 (RR) contributes to the dUMP binding site. The active-site Nucleophile is the Cys146. Residues 166-169 (RSCD), Asn177, and 207-209 (HLY) each bind dUMP. Position 169 (Asp169) interacts with (6R)-5,10-methylene-5,6,7,8-tetrahydrofolate. Ala263 lines the (6R)-5,10-methylene-5,6,7,8-tetrahydrofolate pocket.

It belongs to the thymidylate synthase family. Bacterial-type ThyA subfamily. In terms of assembly, homodimer.

Its subcellular location is the cytoplasm. It carries out the reaction dUMP + (6R)-5,10-methylene-5,6,7,8-tetrahydrofolate = 7,8-dihydrofolate + dTMP. It functions in the pathway pyrimidine metabolism; dTTP biosynthesis. Its function is as follows. Catalyzes the reductive methylation of 2'-deoxyuridine-5'-monophosphate (dUMP) to 2'-deoxythymidine-5'-monophosphate (dTMP) while utilizing 5,10-methylenetetrahydrofolate (mTHF) as the methyl donor and reductant in the reaction, yielding dihydrofolate (DHF) as a by-product. This enzymatic reaction provides an intracellular de novo source of dTMP, an essential precursor for DNA biosynthesis. The chain is Thymidylate synthase from Shewanella baltica (strain OS223).